Consider the following 456-residue polypeptide: MGQTLFDKVWNKHVLTGNEGEPQLLYIDLHLIHEVTSPQAFEGLRLQNRKLRRPDLTFATLDHNVPTIDIFNIKDEIANKQITTLQKNAKEFGVQLFDMGSVEQGIVHMVGPETGLTQPGKTIVCGDSHTATHGAFGAIAFGIGTSEVEHVFATQTLWQTKPKNLKIDVTGQLPKGVYAKDIILYLISQYGVDFGTGYAIEFTGETIRSLSMEARMTICNMAIEAGAKYGLMQPDEMTFAYVKDRKYARNFDRSINDWRQLYTDADAKFDKVIKLDVTNLEPQVTWGTNPEMGVSFNTPFPKIKNINDERAYQYMGLKPGQKAEDIDLGYVFLGSCTNARLSDLVEASRIVKGKQVHPKITAIVVPGSRSVKKEAEALGLDKIFKDAGFQWREPGCSMCLGMNPDQVPEGIHCASTSNRNFEGRQGKGARTHLVSPAMAAAAAIEGRFVDVRKVVV.

Positions 336, 396, and 399 each coordinate [4Fe-4S] cluster.

It belongs to the aconitase/IPM isomerase family. LeuC type 1 subfamily. Heterodimer of LeuC and LeuD. [4Fe-4S] cluster serves as cofactor.

The enzyme catalyses (2R,3S)-3-isopropylmalate = (2S)-2-isopropylmalate. It functions in the pathway amino-acid biosynthesis; L-leucine biosynthesis; L-leucine from 3-methyl-2-oxobutanoate: step 2/4. Its function is as follows. Catalyzes the isomerization between 2-isopropylmalate and 3-isopropylmalate, via the formation of 2-isopropylmaleate. The sequence is that of 3-isopropylmalate dehydratase large subunit from Staphylococcus haemolyticus (strain JCSC1435).